Consider the following 284-residue polypeptide: uncharacterized protein (284 aa).

Residues Asn-79, Asn-102, Asn-111, Asn-147, Asn-162, Asn-174, Asn-196, Asn-211, Asn-228, and Asn-234 are each glycosylated (N-linked (GlcNAc...) asparagine; by host). The helical transmembrane segment at 239-259 threads the bilayer; the sequence is AFTYGSWGVAMLLFAAVMVLV.

This sequence belongs to the RL11 family.

Its subcellular location is the membrane. This is an uncharacterized protein from Human cytomegalovirus (strain AD169) (HHV-5).